A 25-amino-acid polypeptide reads, in one-letter code: GLLDTLKGAAKNVVGSLASKVMEKL.

Position 25 is a leucine amide (Leu-25).

As to expression, expressed by the skin glands.

Its subcellular location is the secreted. Its function is as follows. Antibacterial peptide that inhibits reference strains of both Gram-negative bacteria (E.coli, E.cloacae, K.pneumoniae, P.aeruginosa) and Gram-positive bacteria (S.aureus, S.epidermidis, E.faecalis, Streptococcus group B) with relatively low potencies (MIC=25-200 uM). The peptide shows very low hemolytic activity against human erythrocytes. Wheel projection demonstrates the amphipathicity of the alpha-helices is low which may explain the low antibacterial potency. This Leptodactylus pentadactylus (Smokey jungle frog) protein is Ocellatin-P1.